The chain runs to 444 residues: Probable glycine dehydrogenase (decarboxylating) subunit 1 (444 aa).

Belongs to the GcvP family. N-terminal subunit subfamily. In terms of assembly, the glycine cleavage system is composed of four proteins: P, T, L and H. In this organism, the P 'protein' is a heterodimer of two subunits.

The catalysed reaction is N(6)-[(R)-lipoyl]-L-lysyl-[glycine-cleavage complex H protein] + glycine + H(+) = N(6)-[(R)-S(8)-aminomethyldihydrolipoyl]-L-lysyl-[glycine-cleavage complex H protein] + CO2. The glycine cleavage system catalyzes the degradation of glycine. The P protein binds the alpha-amino group of glycine through its pyridoxal phosphate cofactor; CO(2) is released and the remaining methylamine moiety is then transferred to the lipoamide cofactor of the H protein. The sequence is that of Probable glycine dehydrogenase (decarboxylating) subunit 1 from Chlorobium luteolum (strain DSM 273 / BCRC 81028 / 2530) (Pelodictyon luteolum).